A 380-amino-acid chain; its full sequence is MTNIRKTHPLIKIINETIIDLPTPSNISIWWNFGSLLGICLITQIVTGLFLAMHYTADITTAFSSVAHICRDVNYGWLIRSTHANGASLFFICIYLHVARGLYYGSYLQKETWNIGVILLMLVMITAFVGYVLPWGQMSFWGATVITNLLSAVPYIGDTLVQWIWGGFSVDNATLTRFFAFHFLLPFVISGASIIHLLFLHETGSNNPTGLNSDADKVTFHPYFSYKDMLGFLITLTTLAFLTLFTPNLLGDPENFTPANPLTTPPHIKPEWYFLFAYAILRSIPNKLGGVLALVSSILVLLLVPILHTSKQRGNTFRPITQMLFWALVADMLILTWIGGQPVEYPFMTIGQIASITYFSLFLILIPMTGWLENKAMNWN.

A run of 4 helical transmembrane segments spans residues 33–53, 77–98, 113–133, and 178–198; these read FGSL…FLAM, WLIR…YLHV, WNIG…GYVL, and FFAF…IHLL. Residues histidine 83 and histidine 97 each coordinate heme b. Positions 182 and 196 each coordinate heme b. Histidine 201 serves as a coordination point for a ubiquinone. 4 consecutive transmembrane segments (helical) span residues 226 to 246, 288 to 308, 320 to 340, and 347 to 367; these read YKDM…TLFT, LGGV…PILH, ITQM…WIGG, and FMTI…ILIP.

The protein belongs to the cytochrome b family. In terms of assembly, the cytochrome bc1 complex contains 3 respiratory subunits (MT-CYB, CYC1 and UQCRFS1), 2 core proteins (UQCRC1 and UQCRC2) and probably 6 low-molecular weight proteins. Requires heme b as cofactor.

The protein localises to the mitochondrion inner membrane. Component of the ubiquinol-cytochrome c reductase complex (complex III or cytochrome b-c1 complex) that is part of the mitochondrial respiratory chain. The b-c1 complex mediates electron transfer from ubiquinol to cytochrome c. Contributes to the generation of a proton gradient across the mitochondrial membrane that is then used for ATP synthesis. The chain is Cytochrome b (mt-cyb) from Latimeria chalumnae (Coelacanth).